Reading from the N-terminus, the 581-residue chain is Multidrug resistance-like ATP-binding protein MdlA (581 aa).

Residues 18–303 (YLGSIILLII…LAWMFNIVER (286 aa)) form the ABC transmembrane type-1 domain. The next 6 membrane-spanning stretches (helical) occupy residues 23–43 (ILLI…GILI), 53–73 (GFEI…VYIL), 127–149 (VVFA…ISVL), 153–175 (ITQI…AILI), 247–267 (VIYL…GWLV), and 280–300 (FIMY…MFNI). The ABC transporter domain maps to 337-571 (INIDMFFYPK…KNWYKSMYDH (235 aa)). An ATP-binding site is contributed by 369–376 (GPTGAGKS).

This sequence belongs to the ABC transporter superfamily. Drug exporter-2 (TC 3.A.1.117) family.

Its subcellular location is the cell membrane. The catalysed reaction is ATP + H2O + xenobioticSide 1 = ADP + phosphate + xenobioticSide 2.. The chain is Multidrug resistance-like ATP-binding protein MdlA (mdlA) from Buchnera aphidicola subsp. Schizaphis graminum (strain Sg).